A 256-amino-acid chain; its full sequence is E3 ubiquitin-protein ligase MIR2 (256 aa).

The Cytoplasmic segment spans residues 1-83; that stretch reads MASKDVEEGV…NLWPEMERQE (83 aa). The RING-CH-type zinc finger occupies 7-66; that stretch reads EEGVEGPICWICREEVGNEGIHPCACTGELDVVHPQCLSTWLTVSRNTACQMCRVIYRTR. Zn(2+)-binding residues include C15, C18, C30, C32, H40, C43, C56, and C59. A helical membrane pass occupies residues 84 to 104; sequence IFELFLLMSVVVAGLVGVALC. The Extracellular segment spans residues 105 to 124; the sequence is TWTLLVILTAPAGTFSPGAV. The helical transmembrane segment at 125–145 threads the bilayer; it reads LGFLCFFGFYQIFIVFAFGGI. Residues 146–256 are Cytoplasmic-facing; it reads CRVSGTVRAL…VRKNHPKNNG (111 aa). The disordered stretch occupies residues 179-256; that stretch reads DNIELTVLVG…VRKNHPKNNG (78 aa). Residues 193-203 show a composition bias toward acidic residues; that stretch reads TDEEPTDESSE. Basic residues predominate over residues 245–256; the sequence is KPVRKNHPKNNG.

In terms of assembly, binds human MHC-I, CD86, ICAM1 and CD1D.

It is found in the host cell membrane. It localises to the host endoplasmic reticulum. It carries out the reaction S-ubiquitinyl-[E2 ubiquitin-conjugating enzyme]-L-cysteine + [acceptor protein]-L-lysine = [E2 ubiquitin-conjugating enzyme]-L-cysteine + N(6)-ubiquitinyl-[acceptor protein]-L-lysine.. The protein operates within protein modification; protein ubiquitination. Membrane-bound E3 ubiquitin ligase expressed at the immediate early stage of viral reactivation to mediate polyubiquitination of various host membrane proteins related to the immune response. Promotes ubiquitination and subsequent degradation of host MHC-I, CD86, DC-SIGN and DC-SIGNR, ICAM1 and CD1D molecules, presumably to prevent lysis of infected cells by cytotoxic T-lymphocytes and NK cell. Plays a role in the down-regulation of the host stress-induced NKG2D ligands MICA, MICB and CLEC2B, which enable immune cells expressing the NKG2D receptor to recognize and annihilate infected cells prior to viral spread. Alters monocyte metabolism and proliferation by mediating rapid internalization of cellular growth factor-binding receptor tyrosine kinases from the surface leading to increased signaling. This chain is E3 ubiquitin-protein ligase MIR2 (K5), found in Homo sapiens (Human).